Here is a 399-residue protein sequence, read N- to C-terminus: MEFNFIINKLVQLDQQGLGVYIPRASRSKVSSQQEQQLGQVLNTMGERSAIAQGLKQVITNYDKVQGTDQRVYIVAEGRTCQGFLKVGQKNLFYRDMMGNIKEIKPLCVLDFYVHESCQRQGYGKLLFEYMIQCEQTSPEKLAYDRPSPKLIAFLKKHYNLVKYIAQNNNFVVFDQYFRSDASSQNKQNQNTRSYSQPYSDYSSQIPTNYPQQQQQQSNSKSYPYKQENNIDLMQHSSSRNNKEFLNAGRAILSKEEIYKKDNLSQQNIENTLNNINNSQYSTKSQQQQQYQKDYQLDKYENNWGADKNIKKPPFPGQDRQLDKIQQKIQQTERELDVVNQQIIKQRQNLSQDPLTQNHRAQNVYNTNQFGTSPWAQTGFNYYSTSSSNYGNHYTYYKK.

The N-acetyltransferase domain maps to 1 to 178 (MEFNFIINKL…NNFVVFDQYF (178 aa)). Acetyl-CoA-binding positions include 112 to 125 (FYVH…GYGK) and 148 to 157 (SPKLIAFLKK). The segment covering 183 to 193 (SSQNKQNQNTR) has biased composition (polar residues). Residues 183-223 (SSQNKQNQNTRSYSQPYSDYSSQIPTNYPQQQQQQSNSKSY) form a disordered region. Residues 194 to 223 (SYSQPYSDYSSQIPTNYPQQQQQQSNSKSY) show a composition bias toward low complexity.

The protein belongs to the acetyltransferase ATAT1 family.

The enzyme catalyses L-lysyl-[alpha-tubulin] + acetyl-CoA = N(6)-acetyl-L-lysyl-[alpha-tubulin] + CoA + H(+). Specifically acetylates 'Lys-40' in alpha-tubulin on the lumenal side of microtubules. Promotes microtubule destabilization and accelerates microtubule dynamics; this activity may be independent of acetylation activity. Acetylates alpha-tubulin with a slow enzymatic rate, due to a catalytic site that is not optimized for acetyl transfer. Enters the microtubule through each end and diffuses quickly throughout the lumen of microtubules. Acetylates only long/old microtubules because of its slow acetylation rate since it does not have time to act on dynamically unstable microtubules before the enzyme is released. The polypeptide is Alpha-tubulin N-acetyltransferase (Tetrahymena thermophila (strain SB210)).